The sequence spans 510 residues: RNA-splicing ligase RtcB homolog (510 aa).

Residues D124, C127, H232, H264, and H358 each coordinate Mn(2+). 231–235 (NHYAE) is a GMP binding site. GMP-binding positions include 358 to 359 (HN), 407 to 410 (GGTM), S414, 433 to 436 (HGAG), and K509. H433 serves as the catalytic GMP-histidine intermediate.

The protein belongs to the RtcB family. As to quaternary structure, catalytic component of the tRNA-splicing ligase complex. The cofactor is Mn(2+).

The catalysed reaction is a 3'-end 3'-phospho-ribonucleotide-RNA + a 5'-end dephospho-ribonucleoside-RNA + GTP = a ribonucleotidyl-ribonucleotide-RNA + GMP + diphosphate. The enzyme catalyses a 3'-end 2',3'-cyclophospho-ribonucleotide-RNA + a 5'-end dephospho-ribonucleoside-RNA + GTP + H2O = a ribonucleotidyl-ribonucleotide-RNA + GMP + diphosphate + H(+). Catalytic subunit of the tRNA-splicing ligase complex that acts by directly joining spliced tRNA halves to mature-sized tRNAs by incorporating the precursor-derived splice junction phosphate into the mature tRNA as a canonical 3',5'-phosphodiester. May act as an RNA ligase with broad substrate specificity, and may function toward other RNAs. The polypeptide is RNA-splicing ligase RtcB homolog (Trichoplax adhaerens (Trichoplax reptans)).